The following is a 122-amino-acid chain: MIQVQSRMKVADNTGAKELMCIKVLGGSWRKYANIGDVVVASVKNATPGGVVKKGDVVKCVIVRSKKGVRRPDGSYIRFDENAAVIIKDDKNPRGTRIFGPVARELREKNFMKIVSLAPEVL.

This sequence belongs to the universal ribosomal protein uL14 family. As to quaternary structure, part of the 50S ribosomal subunit. Forms a cluster with proteins L3 and L19. In the 70S ribosome, L14 and L19 interact and together make contacts with the 16S rRNA in bridges B5 and B8.

Functionally, binds to 23S rRNA. Forms part of two intersubunit bridges in the 70S ribosome. The protein is Large ribosomal subunit protein uL14 of Ruminiclostridium cellulolyticum (strain ATCC 35319 / DSM 5812 / JCM 6584 / H10) (Clostridium cellulolyticum).